Here is a 416-residue protein sequence, read N- to C-terminus: Lysosome-associated membrane glycoprotein 3 (416 aa).

The signal sequence occupies residues 1 to 27 (MPRQLSAAAVLFASLAVILHDGSQMRA). Over 28-381 (KAFPKTRDYS…NVDECSSDYT (354 aa)) the chain is Lumenal. The interval 135-217 (PPTITPPAHT…ASTVPGSTLA (83 aa)) is disordered. Over residues 142-170 (AHTTGTSSSTVNHTTGNATQPSNQTTLPA) the composition is skewed to polar residues. Low complexity predominate over residues 188–208 (PTHAPGTTAAAHNTTRTAAPA). The N-linked (GlcNAc...) asparagine glycan is linked to Asn-200. Cys-237 and Cys-274 are disulfide-bonded. Residue Asn-291 is glycosylated (N-linked (GlcNAc...) asparagine). Residues Cys-339 and Cys-376 are joined by a disulfide bond. The chain crosses the membrane as a helical span at residues 382-402 (IVLPVIGAIVVGLCLVGMGVY). At 403-416 (KIRLRCQSSGYQRI) the chain is on the cytoplasmic side.

This sequence belongs to the LAMP family. In terms of assembly, monomer. Interacts with FURIN.

It localises to the cell surface. It is found in the lysosome membrane. The protein resides in the cytoplasmic vesicle membrane. Its subcellular location is the early endosome membrane. Its function is as follows. Lysosomal membrane glycoprotein which plays a role in the unfolded protein response (UPR) that contributes to protein degradation and cell survival during proteasomal dysfunction. Plays a role in the process of fusion of the lysosome with the autophagosome, thereby modulating the autophagic process. Promotes hepatocellular lipogenesis through activation of the PI3K/Akt pathway. May also play a role in dendritic cell function and in adaptive immunity. This is Lysosome-associated membrane glycoprotein 3 (LAMP3) from Macaca mulatta (Rhesus macaque).